A 245-amino-acid polypeptide reads, in one-letter code: 1-(5-phosphoribosyl)-5-[(5-phosphoribosylamino)methylideneamino] imidazole-4-carboxamide isomerase (245 aa).

Catalysis depends on Asp8, which acts as the Proton acceptor. Asp129 acts as the Proton donor in catalysis.

The protein belongs to the HisA/HisF family.

It localises to the cytoplasm. The enzyme catalyses 1-(5-phospho-beta-D-ribosyl)-5-[(5-phospho-beta-D-ribosylamino)methylideneamino]imidazole-4-carboxamide = 5-[(5-phospho-1-deoxy-D-ribulos-1-ylimino)methylamino]-1-(5-phospho-beta-D-ribosyl)imidazole-4-carboxamide. It functions in the pathway amino-acid biosynthesis; L-histidine biosynthesis; L-histidine from 5-phospho-alpha-D-ribose 1-diphosphate: step 4/9. The polypeptide is 1-(5-phosphoribosyl)-5-[(5-phosphoribosylamino)methylideneamino] imidazole-4-carboxamide isomerase (Sinorhizobium fredii (strain NBRC 101917 / NGR234)).